A 248-amino-acid chain; its full sequence is 21S rRNA pseudouridine(2819) synthase (248 aa).

Residue D58 is part of the active site.

This sequence belongs to the pseudouridine synthase RluA family.

It is found in the mitochondrion. It carries out the reaction uridine(2819) in 21S rRNA = pseudouridine(2819) in 21S rRNA. Functionally, pseudouridylate synthase responsible for the pseudouridine-2819 formation in mitochondrial 21S rRNA. May modulate the efficiency or the fidelity of the mitochondrial translation machinery. This is 21S rRNA pseudouridine(2819) synthase (PUS5) from Candida albicans (strain SC5314 / ATCC MYA-2876) (Yeast).